A 471-amino-acid polypeptide reads, in one-letter code: Putative multidrug resistance protein MdtD (471 aa).

The Periplasmic segment spans residues 1–11 (MTDLPDSTRWQ). A helical transmembrane segment spans residues 12–32 (LWIVAFGFFMQSLDTTIVNTA). Topologically, residues 33 to 48 (LPSMAQSLGESPLHMH) are cytoplasmic. A helical membrane pass occupies residues 49-69 (MVIVSYVLTVAVMLPASGWLA). The Periplasmic segment spans residues 70 to 76 (DKVGVRN). The helical transmembrane segment at 77-97 (IFFTAIVLFTLGSLFCALSGT) threads the bilayer. Residues 98–101 (LNEL) lie on the Cytoplasmic side of the membrane. Residues 102 to 124 (LLARALQGVGGAMMVPVGRLTVM) form a helical membrane-spanning segment. Over 125–137 (KIVPREQYMAAMT) the chain is Periplasmic. The chain crosses the membrane as a helical span at residues 138–158 (FVTLPGQVGPLLGPALGGLLV). Residues 159–164 (EYASWH) lie on the Cytoplasmic side of the membrane. The helical transmembrane segment at 165-185 (WIFLINIPVGIIGAIATLMLM) threads the bilayer. Over 186 to 196 (PNYTMQTRRFD) the chain is Periplasmic. Residues 197 to 217 (LSGFLLLAVGMAVLTLALDGS) traverse the membrane as a helical segment. Topologically, residues 218-224 (KGTGFSP) are cytoplasmic. Residues 225–245 (LAIAGLVAVGVVALVLYLLHA) form a helical membrane-spanning segment. At 246–262 (QNNNRALFSLKLFRTRN) the chain is on the periplasmic side. The helical transmembrane segment at 263-283 (FSLGLAGSFAGRIGSGMLPFM) threads the bilayer. Topologically, residues 284-285 (TP) are cytoplasmic. A helical membrane pass occupies residues 286 to 306 (VFLQIGLGFSPFHAGLMMIPM). The Periplasmic portion of the chain corresponds to 307-341 (VLGSMGMKRIVVQVVNRFGYRRVLVATTLGLSLVT). Residues 342 to 362 (LLFMTTALLGWYYVLPFVLFL) traverse the membrane as a helical segment. Topologically, residues 363 to 395 (QGMVNSTRFSSMNTLTLKDLPDNLASSGNSLLS) are cytoplasmic. A helical transmembrane segment spans residues 396 to 416 (MIMQLSMSIGVTIAGLLLGLF). Residues 417 to 430 (GSQHVSVDSGTTQT) are Periplasmic-facing. A helical membrane pass occupies residues 431–451 (VFMYTWLSMAFIIALPAFVFA). At 452 to 471 (RVPSDTHQNVAISRRKRSAQ) the chain is on the cytoplasmic side.

Belongs to the major facilitator superfamily. TCR/Tet family.

It is found in the cell inner membrane. In Escherichia coli O1:K1 / APEC, this protein is Putative multidrug resistance protein MdtD.